The following is a 201-amino-acid chain: Peptidyl-tRNA hydrolase (201 aa).

TRNA is bound at residue Y14. The active-site Proton acceptor is the H19. Positions 64, 66, and 112 each coordinate tRNA.

It belongs to the PTH family. As to quaternary structure, monomer.

It is found in the cytoplasm. It carries out the reaction an N-acyl-L-alpha-aminoacyl-tRNA + H2O = an N-acyl-L-amino acid + a tRNA + H(+). Hydrolyzes ribosome-free peptidyl-tRNAs (with 1 or more amino acids incorporated), which drop off the ribosome during protein synthesis, or as a result of ribosome stalling. Functionally, catalyzes the release of premature peptidyl moieties from peptidyl-tRNA molecules trapped in stalled 50S ribosomal subunits, and thus maintains levels of free tRNAs and 50S ribosomes. This is Peptidyl-tRNA hydrolase from Rhodopseudomonas palustris (strain BisB18).